The following is a 184-amino-acid chain: MKNIFSILKLTFLMVVLFAVIYPLAIYGIAQFAPNKGKGETISVNEKVVGYQKIGQKFDQSNYFWGRPSAVDYNAAGSGGSNKAASNPDYLALVQKRIDTFLIAHPYLKKLEIPADMVTASGSGLDPNISPEGALIQVKRVAEVRKLSEEKVKALVENKINKPTLAGTSTVNVLELNVALDELK.

Residues 10–30 (LTFLMVVLFAVIYPLAIYGIA) traverse the membrane as a helical segment.

It belongs to the KdpC family. In terms of assembly, the system is composed of three essential subunits: KdpA, KdpB and KdpC.

It is found in the cell inner membrane. Part of the high-affinity ATP-driven potassium transport (or Kdp) system, which catalyzes the hydrolysis of ATP coupled with the electrogenic transport of potassium into the cytoplasm. This subunit acts as a catalytic chaperone that increases the ATP-binding affinity of the ATP-hydrolyzing subunit KdpB by the formation of a transient KdpB/KdpC/ATP ternary complex. This is Potassium-transporting ATPase KdpC subunit from Flavobacterium psychrophilum (strain ATCC 49511 / DSM 21280 / CIP 103535 / JIP02/86).